The chain runs to 328 residues: tRNA uridine(34) hydroxylase (328 aa).

Positions 130 to 224 (LDKDTVVLDT…YGKDPEVQGE (95 aa)) constitute a Rhodanese domain. Residue Cys184 is the Cysteine persulfide intermediate of the active site.

The protein belongs to the TrhO family.

It carries out the reaction uridine(34) in tRNA + AH2 + O2 = 5-hydroxyuridine(34) in tRNA + A + H2O. Catalyzes oxygen-dependent 5-hydroxyuridine (ho5U) modification at position 34 in tRNAs. The chain is tRNA uridine(34) hydroxylase from Streptococcus pneumoniae (strain P1031).